Consider the following 222-residue polypeptide: Transmembrane reductase CYB561D2 (222 aa).

At 2-17 (ALSVETESHIYRALRT) the chain is on the cytoplasmic side. The region spanning 14–217 (ALRTASGAAA…NQVSNAYLYR (204 aa)) is the Cytochrome b561 domain. The chain crosses the membrane as a helical span at residues 18–38 (ASGAAAHLVALGFTIFVAVLA). Topologically, residues 39-46 (RPGSSLFS) are lumenal. Residues 47–67 (WHPVLMSLAFSFLMTEALLMF) traverse the membrane as a helical segment. Histidine 48 lines the heme b pocket. Residues 68-85 (SPESSLLRSLSRKVRARC) lie on the Cytoplasmic side of the membrane. Heme b contacts are provided by histidine 86 and histidine 120. A helical membrane pass occupies residues 86–106 (HWVLQLLALLCALLGLGLVIL). At 107–122 (HKEQLGKAHLTTRHGQ) the chain is on the lumenal side. Residues 123 to 143 (AGLLAVLWAGLQCSGGMGLLY) traverse the membrane as a helical segment. Topologically, residues 144-162 (PKLLPRWPLAKLKLYHATS) are cytoplasmic. Histidine 159 is a binding site for heme b. The helical transmembrane segment at 163-183 (GLVGYLLGSASLLLGMFSLWF) threads the bilayer. At 184 to 186 (TAT) the chain is on the lumenal side. The helical transmembrane segment at 187 to 207 (VTGGAWYLAVLCPILTSLVIM) threads the bilayer. Residues 208–222 (NQVSNAYLYRKRIQP) are Cytoplasmic-facing.

The cofactor is heme b. In terms of tissue distribution, highly expressed in the brain, lung, liver, and kidney. Moderately expressed in the heart, placenta, skeletal muscle, and pancreas.

It is found in the endoplasmic reticulum membrane. The protein resides in the cytoplasmic vesicle membrane. It catalyses the reaction monodehydro-L-ascorbate radical(out) + L-ascorbate(in) = monodehydro-L-ascorbate radical(in) + L-ascorbate(out). The catalysed reaction is Fe(3+)(out) + L-ascorbate(in) = monodehydro-L-ascorbate radical(in) + Fe(2+)(out) + H(+). In terms of biological role, transmembrane reductase that may use ascorbate as an electron donor in the cytoplasm and transfer electrons across endoplasmic reticulum membranes to reduce monodehydro-L-ascorbate radical and iron cations Fe(3+) in the lumen of that compartment. This is Transmembrane reductase CYB561D2 from Mus musculus (Mouse).